Reading from the N-terminus, the 472-residue chain is Ribulose bisphosphate carboxylase large chain (472 aa).

Asn115 and Thr165 together coordinate substrate. Catalysis depends on Lys167, which acts as the Proton acceptor. Lys169 contacts substrate. Residues Lys193, Asp195, and Glu196 each contribute to the Mg(2+) site. Lys193 carries the post-translational modification N6-carboxylysine. His286 serves as the catalytic Proton acceptor. Substrate-binding residues include Arg287, His319, and Ser371.

This sequence belongs to the RuBisCO large chain family. Type I subfamily. Heterohexadecamer of 8 large chains and 8 small chains. Requires Mg(2+) as cofactor.

The catalysed reaction is 2 (2R)-3-phosphoglycerate + 2 H(+) = D-ribulose 1,5-bisphosphate + CO2 + H2O. It carries out the reaction D-ribulose 1,5-bisphosphate + O2 = 2-phosphoglycolate + (2R)-3-phosphoglycerate + 2 H(+). RuBisCO catalyzes two reactions: the carboxylation of D-ribulose 1,5-bisphosphate, the primary event in carbon dioxide fixation, as well as the oxidative fragmentation of the pentose substrate. Both reactions occur simultaneously and in competition at the same active site. The polypeptide is Ribulose bisphosphate carboxylase large chain (Solemya velum gill symbiont).